The sequence spans 317 residues: Polysulfide reductase chain C (317 aa).

Helical transmembrane passes span 20-40 (IAVY…AIII), 54-75 (IIKA…LLIF), 98-118 (LGVL…LGVF), 147-167 (IVTF…LSAM), 182-202 (FLAS…LLFF), 221-237 (VILF…VGMY), 259-279 (LFWL…NVAL), and 289-309 (FVML…FYIL).

The protein belongs to the NrfD family. In terms of assembly, functional polysulfide reductase is made up of three different (A, B, and C) subunits.

The protein localises to the cell inner membrane. Could possibly serve as the membrane anchor of the enzyme. Functionally, component of the phosphorylative electron transport system with polysulfide as the terminal acceptor. The protein is Polysulfide reductase chain C (psrC) of Wolinella succinogenes (strain ATCC 29543 / DSM 1740 / CCUG 13145 / JCM 31913 / LMG 7466 / NCTC 11488 / FDC 602W) (Vibrio succinogenes).